Consider the following 118-residue polypeptide: MSFRKKTKQVKKVNLGFKIDCSQPVEDKVILIGEFAEFLKSKIKVGGKLGNLGENITISNDDKKINVQSTIPFSKRYLKYLTKKYLKKQDLRNYLYVTSSDKNSYQLRYFNIQQDQAE.

This sequence belongs to the eukaryotic ribosomal protein eL22 family.

The protein is Large ribosomal subunit protein eL22 (RPL22) of Tetrahymena thermophila (strain SB210).